A 260-amino-acid polypeptide reads, in one-letter code: Global transcriptional regulator CodY (260 aa).

The segment at 1-159 is GAF domain; the sequence is MPNLLQKTRK…SSTVVGIQLL (159 aa). Residues 207 to 226 constitute a DNA-binding region (H-T-H motif); the sequence is ASVIADRIGITRSVIVNALR.

It belongs to the CodY family.

Its subcellular location is the cytoplasm. DNA-binding global transcriptional regulator which is involved in the adaptive response to starvation and acts by directly or indirectly controlling the expression of numerous genes in response to nutrient availability. During rapid exponential growth, CodY is highly active and represses genes whose products allow adaptation to nutrient depletion. In Streptococcus equi subsp. zooepidemicus (strain MGCS10565), this protein is Global transcriptional regulator CodY.